Here is a 447-residue protein sequence, read N- to C-terminus: Glucose-6-phosphate isomerase (447 aa).

Glu288 acts as the Proton donor in catalysis. Residues His309 and Lys423 contribute to the active site.

It belongs to the GPI family.

It localises to the cytoplasm. It catalyses the reaction alpha-D-glucose 6-phosphate = beta-D-fructose 6-phosphate. It functions in the pathway carbohydrate biosynthesis; gluconeogenesis. Its pathway is carbohydrate degradation; glycolysis; D-glyceraldehyde 3-phosphate and glycerone phosphate from D-glucose: step 2/4. Catalyzes the reversible isomerization of glucose-6-phosphate to fructose-6-phosphate. The chain is Glucose-6-phosphate isomerase from Lactobacillus gasseri (strain ATCC 33323 / DSM 20243 / BCRC 14619 / CIP 102991 / JCM 1131 / KCTC 3163 / NCIMB 11718 / NCTC 13722 / AM63).